The following is a 100-amino-acid chain: MITEERILKVLRAPHISEKATMAAEKANTIVFKVAKDATKKEIKAAVEKLFEVEVKSVNTLVLKGKTKRQGMREGRRSDVKKAYVTLKEGQDLDFVGGAE.

It belongs to the universal ribosomal protein uL23 family. Part of the 50S ribosomal subunit. Contacts protein L29, and trigger factor when it is bound to the ribosome.

Functionally, one of the early assembly proteins it binds 23S rRNA. One of the proteins that surrounds the polypeptide exit tunnel on the outside of the ribosome. Forms the main docking site for trigger factor binding to the ribosome. This Vibrio atlanticus (strain LGP32) (Vibrio splendidus (strain Mel32)) protein is Large ribosomal subunit protein uL23.